The following is a 129-amino-acid chain: DNA-directed RNA polymerase subunit omega (129 aa).

The tract at residues 76–101 (EVDEPEPDPVTLAASAADGEDDDQPE) is disordered.

Belongs to the RNA polymerase subunit omega family. In terms of assembly, the RNAP catalytic core consists of 2 alpha, 1 beta, 1 beta' and 1 omega subunit. When a sigma factor is associated with the core the holoenzyme is formed, which can initiate transcription.

The enzyme catalyses RNA(n) + a ribonucleoside 5'-triphosphate = RNA(n+1) + diphosphate. Its function is as follows. Promotes RNA polymerase assembly. Latches the N- and C-terminal regions of the beta' subunit thereby facilitating its interaction with the beta and alpha subunits. This Agrobacterium fabrum (strain C58 / ATCC 33970) (Agrobacterium tumefaciens (strain C58)) protein is DNA-directed RNA polymerase subunit omega.